The sequence spans 476 residues: MVLNRYALITNCNHKTLGLYYLWFSFLFGTYGFLLSVILRTELYSSSLRIIAQENVNLYNMIFTIHGIIMIFFNIMPGLFGGFGNYYLPILCGSSELAYPRINSISLLLQPIAFILVILSTAAEFGGGTGWTLYPPLSTSLMSLSPVAVDVIIIGLLVSGIASIMSSLNFVTTVLHLRAKGLSLGVLSVSTWSIIITSIMLLLTLPVLTGGVLMLLSDLHFNTLFFDPTFAGDPILYQHLFWFFGHPEVYILILPAFGVISHVISTNYCRSLFGNQSMILAMGCIAVLGSVVWVHHMYTTGLEVDTRAFFTSTTILISIPTGTKVFNWLCTYMSSNFGITHSSSLLCLLFICTFTFGGTTGVILGNGAIDIALHDTYYVIAHFHFVLSIGAIIALFTCVSFFQESFFGKTLRENTLIVLWSILFFIGVILTFLPMHFLGFNVMPRRIPDYPDALNGWNMICSIGSTMTLFGLLIFK.

The chain crosses the membrane as a helical span at residues 19–39; the sequence is LYYLWFSFLFGTYGFLLSVIL. Glu-42 serves as a coordination point for Ca(2+). The next 8 helical transmembrane spans lie at 61–81, 105–125, 144–164, 194–214, 240–260, 278–298, 309–329, and 345–365; these read MIFT…GLFG, ISLL…AAEF, LSPV…IASI, IIIT…GVLM, LFWF…FGVI, MILA…HHMY, FFTS…FNWL, and LLCL…VILG. His-66 provides a ligand contact to Fe(II)-heme a. Residue His-246 participates in Cu cation binding. Positions 246–250 form a cross-link, 1'-histidyl-3'-tyrosine (His-Tyr); it reads HPEVY. Position 250 (Tyr-250) interacts with O2. Cu cation is bound by residues His-295 and His-296. Mg(2+) is bound by residues His-374 and Asp-375. Helical transmembrane passes span 379–399 and 415–435; these read VIAH…FTCV and TLIV…FLPM. Position 382 (His-382) interacts with heme a3. His-384 contacts Fe(II)-heme a. Ca(2+) is bound at residue Pro-448. A helical membrane pass occupies residues 455–475; sequence NGWNMICSIGSTMTLFGLLIF.

This sequence belongs to the heme-copper respiratory oxidase family. As to quaternary structure, component of the cytochrome c oxidase (complex IV, CIV), a multisubunit enzyme composed of a catalytic core of 3 subunits and several supernumerary subunits. The complex exists as a monomer or a dimer and forms supercomplexes (SCs) in the inner mitochondrial membrane with ubiquinol-cytochrome c oxidoreductase (cytochrome b-c1 complex, complex III, CIII). Requires heme as cofactor. It depends on Cu cation as a cofactor.

It localises to the mitochondrion inner membrane. It carries out the reaction 4 Fe(II)-[cytochrome c] + O2 + 8 H(+)(in) = 4 Fe(III)-[cytochrome c] + 2 H2O + 4 H(+)(out). Its pathway is energy metabolism; oxidative phosphorylation. Its function is as follows. Component of the cytochrome c oxidase, the last enzyme in the mitochondrial electron transport chain which drives oxidative phosphorylation. The respiratory chain contains 3 multisubunit complexes succinate dehydrogenase (complex II, CII), ubiquinol-cytochrome c oxidoreductase (cytochrome b-c1 complex, complex III, CIII) and cytochrome c oxidase (complex IV, CIV), that cooperate to transfer electrons derived from NADH and succinate to molecular oxygen, creating an electrochemical gradient over the inner membrane that drives transmembrane transport and the ATP synthase. Cytochrome c oxidase is the component of the respiratory chain that catalyzes the reduction of oxygen to water. Electrons originating from reduced cytochrome c in the intermembrane space (IMS) are transferred via the dinuclear copper A center (CU(A)) of subunit 2 and heme A of subunit 1 to the active site in subunit 1, a binuclear center (BNC) formed by heme A3 and copper B (CU(B)). The BNC reduces molecular oxygen to 2 water molecules using 4 electrons from cytochrome c in the IMS and 4 protons from the mitochondrial matrix. The polypeptide is Cytochrome c oxidase subunit 1 (COI) (Plasmodium berghei).